A 406-amino-acid polypeptide reads, in one-letter code: Renin (406 aa).

The signal sequence occupies residues 1 to 23 (MDGWRRMPRWGLLLLLWGSCTFG). A propeptide spans 24 to 66 (LPTDTTTFKRIFLKRMPSIRESLKERGVDMARLGPEWSQPMKR) (activation peptide). Asparagine 71 is a glycosylation site (N-linked (GlcNAc...) asparagine). A Peptidase A1 domain is found at 86–403 (YYGEIGIGTP…DRRNNRIGFA (318 aa)). Aspartate 104 is an active-site residue. Residues cysteine 117 and cysteine 124 are joined by a disulfide bond. Asparagine 141 is a glycosylation site (N-linked (GlcNAc...) asparagine). An intrachain disulfide couples cysteine 283 to cysteine 287. The active site involves aspartate 292. Cysteine 325 and cysteine 362 are disulfide-bonded.

The protein belongs to the peptidase A1 family. As to quaternary structure, interacts with ATP6AP2.

Its subcellular location is the secreted. The protein localises to the membrane. The enzyme catalyses Cleavage of Leu-|-Xaa bond in angiotensinogen to generate angiotensin I.. Its activity is regulated as follows. Interaction with ATP6AP2 results in a 5-fold increased efficiency in angiotensinogen processing. Renin is a highly specific endopeptidase, whose only known function is to generate angiotensin I from angiotensinogen in the plasma, initiating a cascade of reactions that produce an elevation of blood pressure and increased sodium retention by the kidney. This is Renin (REN) from Macaca fascicularis (Crab-eating macaque).